A 228-amino-acid chain; its full sequence is Large ribosomal subunit protein uL3 (228 aa).

The residue at position 151 (Q151) is an N5-methylglutamine.

Belongs to the universal ribosomal protein uL3 family. As to quaternary structure, part of the 50S ribosomal subunit. Forms a cluster with proteins L14 and L19. Post-translationally, methylated by PrmB.

Its function is as follows. One of the primary rRNA binding proteins, it binds directly near the 3'-end of the 23S rRNA, where it nucleates assembly of the 50S subunit. The chain is Large ribosomal subunit protein uL3 from Rhizobium meliloti (strain 1021) (Ensifer meliloti).